A 66-amino-acid polypeptide reads, in one-letter code: MMYCLPVVCILLLLIPSSATFVVESRLEKDQAQSFTGDAWKRVSPIHEMIQRSQCCAVKKNCCHVG.

Positions 1–20 are cleaved as a signal peptide; that stretch reads MMYCLPVVCILLLLIPSSAT. Residues 21 to 51 constitute a propeptide that is removed on maturation; the sequence is FVVESRLEKDQAQSFTGDAWKRVSPIHEMIQ. Valine amide is present on Val-65.

Belongs to the conotoxin T superfamily. In terms of processing, contains 2 disulfide bonds that can be either 'C1-C3, C2-C4' or 'C1-C4, C2-C3', since these disulfide connectivities have been observed for conotoxins with cysteine framework V (for examples, see AC P0DQQ7 and AC P81755). In terms of tissue distribution, expressed by the venom duct.

The protein localises to the secreted. Probable neurotoxin with unknown target. Possibly targets ion channels. The sequence is that of Conotoxin Cal5.2 from Californiconus californicus (California cone).